A 623-amino-acid polypeptide reads, in one-letter code: tRNA uridine 5-carboxymethylaminomethyl modification enzyme MnmG (623 aa).

12–17 (GAGHAG) provides a ligand contact to FAD. NAD(+) is bound at residue 272 to 286 (GPRYCPSIEDKINRF).

This sequence belongs to the MnmG family. As to quaternary structure, homodimer. Heterotetramer of two MnmE and two MnmG subunits. The cofactor is FAD.

It localises to the cytoplasm. In terms of biological role, NAD-binding protein involved in the addition of a carboxymethylaminomethyl (cmnm) group at the wobble position (U34) of certain tRNAs, forming tRNA-cmnm(5)s(2)U34. In Christiangramia forsetii (strain DSM 17595 / CGMCC 1.15422 / KT0803) (Gramella forsetii), this protein is tRNA uridine 5-carboxymethylaminomethyl modification enzyme MnmG.